Reading from the N-terminus, the 103-residue chain is Small ribosomal subunit protein uS10 (103 aa).

It belongs to the universal ribosomal protein uS10 family. As to quaternary structure, part of the 30S ribosomal subunit.

Functionally, involved in the binding of tRNA to the ribosomes. This chain is Small ribosomal subunit protein uS10, found in Bordetella parapertussis (strain 12822 / ATCC BAA-587 / NCTC 13253).